The sequence spans 365 residues: 4-hydroxy-3-methylbut-2-en-1-yl diphosphate synthase (flavodoxin) (365 aa).

[4Fe-4S] cluster-binding residues include C270, C273, C305, and E312.

This sequence belongs to the IspG family. It depends on [4Fe-4S] cluster as a cofactor.

The enzyme catalyses (2E)-4-hydroxy-3-methylbut-2-enyl diphosphate + 2 oxidized [2Fe-2S]-[ferredoxin] + H2O = 2-C-methyl-D-erythritol 2,4-cyclic diphosphate + 2 reduced [2Fe-2S]-[ferredoxin] + H(+). It carries out the reaction (2E)-4-hydroxy-3-methylbut-2-enyl diphosphate + oxidized [flavodoxin] + H2O + 2 H(+) = 2-C-methyl-D-erythritol 2,4-cyclic diphosphate + reduced [flavodoxin]. The protein operates within isoprenoid biosynthesis; isopentenyl diphosphate biosynthesis via DXP pathway; isopentenyl diphosphate from 1-deoxy-D-xylulose 5-phosphate: step 5/6. Its function is as follows. Converts 2C-methyl-D-erythritol 2,4-cyclodiphosphate (ME-2,4cPP) into 1-hydroxy-2-methyl-2-(E)-butenyl 4-diphosphate. Involved in density-dependent regulation of 2'-N-acetyltransferase. The polypeptide is 4-hydroxy-3-methylbut-2-en-1-yl diphosphate synthase (flavodoxin) (Providencia stuartii).